Reading from the N-terminus, the 546-residue chain is MATQEVRLKCLLCGIIVLVLSLEGLGILHYEKLSKIGLVKGITRKYKIKSNPLTKDIVIKMIPNVSNVSKCTGTVMENYKSRLTGILSPIKGAIELYNNNTHDLVGDVKLAGVVMAGIAIGIATAAQITAGVALYEAMKNADNINKLKSSIESTNEAVVKLQETAEKTVYVLTALQDYINTNLVPTIDQISCKQTELALDLALSKYLSDLLFVFGPNLQDPVSNSMTIQAISQAFGGNYETLLRTLGYATEDFDDLLESDSIAGQIVYVDLSSYYIIVRVYFPILTEIQQAYVQELLPVSFNNDNSEWISIVPNFVLIRNTLISNIEVKYCLITKKSVICNQDYATPMTASVRECLTGSTDKCPRELVVSSHVPRFALSGGVLFANCISVTCQCQTTGRAISQSGEQTLLMIDNTTCTTVVLGNIIISLGKYLGSINYNSESIAVGPPVYTDKVDISSQISSMNQSLQQSKDYIKEAQKILDTVNPSLISMLSMIILYVLSIAALCIGLITFISFVIVEKKRGNYSRLDDRQVRPVSNGDLYYIGT.

The N-terminal stretch at 1–26 (MATQEVRLKCLLCGIIVLVLSLEGLG) is a signal peptide. The Extracellular segment spans residues 27-494 (ILHYEKLSKI…NPSLISMLSM (468 aa)). N-linked (GlcNAc...) asparagine; by host glycosylation is found at Asn64, Asn67, and Asn99. The tract at residues 110-134 (LAGVVMAGIAIGIATAAQITAGVAL) is fusion peptide. Positions 135–163 (YEAMKNADNINKLKSSIESTNEAVVKLQE) form a coiled coil. 4 cysteine pairs are disulfide-bonded: Cys331-Cys340, Cys355-Cys363, Cys387-Cys392, and Cys394-Cys417. 2 N-linked (GlcNAc...) asparagine; by host glycosylation sites follow: Asn414 and Asn464. Residues 459–484 (QISSMNQSLQQSKDYIKEAQKILDTV) are a coiled coil. Residues 495-515 (IILYVLSIAALCIGLITFISF) traverse the membrane as a helical segment. Over 516 to 546 (VIVEKKRGNYSRLDDRQVRPVSNGDLYYIGT) the chain is Cytoplasmic.

Belongs to the paramyxoviruses fusion glycoprotein family. As to quaternary structure, homotrimer of disulfide-linked F1-F2. Post-translationally, the inactive precursor F0 is glycosylated and proteolytically cleaved into F1 and F2 to be functionally active. The cleavage is mediated by cellular proteases during the transport and maturation of the polypeptide.

The protein resides in the virion membrane. It localises to the host cell membrane. Functionally, class I viral fusion protein. Under the current model, the protein has at least 3 conformational states: pre-fusion native state, pre-hairpin intermediate state, and post-fusion hairpin state. During viral and plasma cell membrane fusion, the heptad repeat (HR) regions assume a trimer-of-hairpins structure, positioning the fusion peptide in close proximity to the C-terminal region of the ectodomain. The formation of this structure appears to drive apposition and subsequent fusion of viral and plasma cell membranes. Directs fusion of viral and cellular membranes leading to delivery of the nucleocapsid into the cytoplasm. This fusion is pH independent and occurs directly at the outer cell membrane. The trimer of F1-F2 (F protein) probably interacts with G at the virion surface. Upon G binding to its cellular receptor, the hydrophobic fusion peptide is unmasked and interacts with the cellular membrane, inducing the fusion between cell and virion membranes. Later in infection, F proteins expressed at the plasma membrane of infected cells could mediate fusion with adjacent cells to form syncytia, a cytopathic effect that could lead to tissue necrosis. In Hendra virus (isolate Horse/Autralia/Hendra/1994), this protein is Fusion glycoprotein F0 (F).